A 252-amino-acid polypeptide reads, in one-letter code: 5'-nucleotidase SurE (252 aa).

Residues aspartate 8, aspartate 9, serine 39, and asparagine 91 each contribute to the a divalent metal cation site.

It belongs to the SurE nucleotidase family. A divalent metal cation serves as cofactor.

Its subcellular location is the cytoplasm. The enzyme catalyses a ribonucleoside 5'-phosphate + H2O = a ribonucleoside + phosphate. In terms of biological role, nucleotidase that shows phosphatase activity on nucleoside 5'-monophosphates. This Legionella pneumophila (strain Paris) protein is 5'-nucleotidase SurE.